The primary structure comprises 245 residues: MLIVLPPSETKTHGGSGKPLDFHHLSFPSLTKARQTILADLQALEVDEALKVLGISEKLRPEAESNRALETSPTMPAIFRYSGVLYDALDAATLPEKALERLAIGSALFGVIHATDPIPHYRLSGGTKLPTKSGELPTMKARWGTSISEALIDVNQLVIDLRSGTYQQLGRVKDAVTVRVESVMEDGSRKVVSHFNKHYKGELARVLALSEKEAHNAEDVMSIAQAAGLVVEENPNHKETLTLVV.

This sequence belongs to the UPF0246 family.

In Corynebacterium glutamicum (strain ATCC 13032 / DSM 20300 / JCM 1318 / BCRC 11384 / CCUG 27702 / LMG 3730 / NBRC 12168 / NCIMB 10025 / NRRL B-2784 / 534), this protein is UPF0246 protein Cgl1995/cg2186.